The chain runs to 166 residues: ATP synthase subunit b (166 aa).

Residues 27 to 47 form a helical membrane-spanning segment; the sequence is FFVVLLIFLIVLGVIAKWVVP. Positions 124 to 143 are disordered; it reads SADQQLSQQGSAAQSELQSS.

The protein belongs to the ATPase B chain family. As to quaternary structure, F-type ATPases have 2 components, F(1) - the catalytic core - and F(0) - the membrane proton channel. F(1) has five subunits: alpha(3), beta(3), gamma(1), delta(1), epsilon(1). F(0) has three main subunits: a(1), b(2) and c(10-14). The alpha and beta chains form an alternating ring which encloses part of the gamma chain. F(1) is attached to F(0) by a central stalk formed by the gamma and epsilon chains, while a peripheral stalk is formed by the delta and b chains.

It is found in the cell membrane. F(1)F(0) ATP synthase produces ATP from ADP in the presence of a proton or sodium gradient. F-type ATPases consist of two structural domains, F(1) containing the extramembraneous catalytic core and F(0) containing the membrane proton channel, linked together by a central stalk and a peripheral stalk. During catalysis, ATP synthesis in the catalytic domain of F(1) is coupled via a rotary mechanism of the central stalk subunits to proton translocation. In terms of biological role, component of the F(0) channel, it forms part of the peripheral stalk, linking F(1) to F(0). This chain is ATP synthase subunit b, found in Mycolicibacterium vanbaalenii (strain DSM 7251 / JCM 13017 / BCRC 16820 / KCTC 9966 / NRRL B-24157 / PYR-1) (Mycobacterium vanbaalenii).